We begin with the raw amino-acid sequence, 1025 residues long: Multidrug resistance protein MdtC (1025 aa).

The next 12 helical transmembrane spans lie at 3 to 23 (FFAL…AITL), 333 to 353 (EVEQ…FLFL), 360 to 380 (IIPA…MYLC), 387 to 407 (LSLM…IVVL), 431 to 451 (VGFT…PLLL), 463 to 483 (FAVT…TLTP), 528 to 548 (LVGV…ISIP), 853 to 873 (VILI…LYES), 875 to 895 (VHPL…LLAL), 897 to 917 (LFNA…IGIV), 953 to 973 (PIMM…LSGG), and 984 to 1004 (ITIV…TPVV).

Belongs to the resistance-nodulation-cell division (RND) (TC 2.A.6) family. MdtC subfamily. In terms of assembly, part of a tripartite efflux system composed of MdtA, MdtB and MdtC. MdtC forms a heteromultimer with MdtB.

Its subcellular location is the cell inner membrane. This Shigella sonnei (strain Ss046) protein is Multidrug resistance protein MdtC.